Here is a 426-residue protein sequence, read N- to C-terminus: Enolase (426 aa).

Q163 is a binding site for (2R)-2-phosphoglycerate. Residue E205 is the Proton donor of the active site. The Mg(2+) site is built by D242, E283, and D310. K335, R364, S365, and K386 together coordinate (2R)-2-phosphoglycerate. The active-site Proton acceptor is the K335.

It belongs to the enolase family. Mg(2+) is required as a cofactor.

It is found in the cytoplasm. Its subcellular location is the secreted. The protein localises to the cell surface. The catalysed reaction is (2R)-2-phosphoglycerate = phosphoenolpyruvate + H2O. Its pathway is carbohydrate degradation; glycolysis; pyruvate from D-glyceraldehyde 3-phosphate: step 4/5. Its function is as follows. Catalyzes the reversible conversion of 2-phosphoglycerate (2-PG) into phosphoenolpyruvate (PEP). It is essential for the degradation of carbohydrates via glycolysis. This is Enolase from Pseudarthrobacter chlorophenolicus (strain ATCC 700700 / DSM 12829 / CIP 107037 / JCM 12360 / KCTC 9906 / NCIMB 13794 / A6) (Arthrobacter chlorophenolicus).